Here is a 125-residue protein sequence, read N- to C-terminus: Crustacean hyperglycemic hormones 5 (125 aa).

A signal peptide spans Met1 to Thr34. Disulfide bonds link Cys58/Cys94, Cys74/Cys90, and Cys77/Cys103. At Val123 the chain carries Valine amide.

It belongs to the arthropod CHH/MIH/GIH/VIH hormone family. In terms of tissue distribution, produced by the medulla terminalis X-organ in the eyestalks and transported to the sinus gland where they are stored and released.

It localises to the secreted. Hormone found in the sinus gland of isopods and decapods which controls the blood sugar level. Has a secretagogue action over the amylase released from the midgut gland. May act as a stress hormone and may be involved in the control of molting and reproduction. This Penaeus japonicus (Kuruma prawn) protein is Crustacean hyperglycemic hormones 5.